Consider the following 163-residue polypeptide: Peptidyl-prolyl cis-trans isomerase-like 1 (163 aa).

A PPIase cyclophilin-type domain is found at 1–155 (MATDVAVETT…TEVKIVKARV (155 aa)).

It belongs to the cyclophilin-type PPIase family. PPIL1 subfamily.

The enzyme catalyses [protein]-peptidylproline (omega=180) = [protein]-peptidylproline (omega=0). Functionally, PPIases accelerate the folding of proteins. It catalyzes the cis-trans isomerization of proline imidic peptide bonds in oligopeptides. The sequence is that of Peptidyl-prolyl cis-trans isomerase-like 1 (ppi-1) from Neurospora crassa (strain ATCC 24698 / 74-OR23-1A / CBS 708.71 / DSM 1257 / FGSC 987).